The following is a 354-amino-acid chain: Rhodopsin (354 aa).

Topologically, residues 1–36 (MNGTEGPYFYVPMVNTTGIVRSPYEYPQYYLVSPAA) are extracellular. 2 N-linked (GlcNAc...) asparagine glycosylation sites follow: Asn-2 and Asn-15. The helical transmembrane segment at 37-61 (YACLGAYMFFLILVGFPINFLTLYV) threads the bilayer. The Cytoplasmic portion of the chain corresponds to 62–73 (TIEHKKLRTPLN). A helical transmembrane segment spans residues 74–96 (YILLNLAVADLFMVFGGFTTTIY). Over 97-110 (TSMHGYFVLGRLGC) the chain is Extracellular. Cys-110 and Cys-187 are joined by a disulfide. Residues 111–133 (NLEGYFATLGGEIGLWSLVVLAV) form a helical membrane-spanning segment. Residues 134–136 (ERW) carry the 'Ionic lock' involved in activated form stabilization motif. At 134-152 (ERWLVVCKPISNFRFSENH) the chain is on the cytoplasmic side. The helical transmembrane segment at 153–173 (AIMGLVFTWIMANSCAAPPLL) threads the bilayer. Topologically, residues 174 to 202 (GWSRYIPEGMQCSCGVDYYTRAEGFNNES) are extracellular. Residues 203 to 224 (FVIYMFICHFCIPLIVVFFCYG) form a helical membrane-spanning segment. Residues 225 to 252 (RLLCAVKEAAAAQQESETTQRAEREVTR) lie on the Cytoplasmic side of the membrane. Residues 253-274 (MVVIMVIGFLVCWIPYASVAWY) form a helical membrane-spanning segment. Residues 275–286 (IFTHQGSEFGPL) lie on the Extracellular side of the membrane. The helical transmembrane segment at 287–308 (FMTVPAFFAKSASIYNPLIYIC) threads the bilayer. The residue at position 296 (Lys-296) is an N6-(retinylidene)lysine. Residues 309–354 (MNKQFRHCMITTLCCGKNPFEEEEGASTTASKTEASSVSSSSVSPA) lie on the Cytoplasmic side of the membrane. Residues Cys-322 and Cys-323 are each lipidated (S-palmitoyl cysteine). The disordered stretch occupies residues 333–354 (GASTTASKTEASSVSSSSVSPA). Residues 334-354 (ASTTASKTEASSVSSSSVSPA) show a composition bias toward low complexity.

This sequence belongs to the G-protein coupled receptor 1 family. Opsin subfamily. Post-translationally, phosphorylated on some or all of the serine and threonine residues present in the C-terminal region. In terms of processing, contains one covalently linked retinal chromophore.

The protein localises to the membrane. It is found in the cell projection. The protein resides in the cilium. It localises to the photoreceptor outer segment. Its function is as follows. Photoreceptor required for image-forming vision at low light intensity. While most salt water fish species use retinal as chromophore, most freshwater fish use 3-dehydroretinal, or a mixture of retinal and 3-dehydroretinal. Light-induced isomerization of 11-cis to all-trans retinal triggers a conformational change that activates signaling via G-proteins. Subsequent receptor phosphorylation mediates displacement of the bound G-protein alpha subunit by arrestin and terminates signaling. The sequence is that of Rhodopsin (rho) from Poecilia reticulata (Guppy).